Here is a 347-residue protein sequence, read N- to C-terminus: NADH-ubiquinone oxidoreductase chain 2 (347 aa).

10 helical membrane passes run 13-33 (IILG…WIGF), 59-79 (YFLI…INLL), 84-104 (WAVS…ALAM), 111-131 (FHFW…LILL), 149-169 (IDPT…GWGG), 178-198 (IMAY…IYNP), 201-221 (TILN…LLII), 240-260 (IAII…LTGF), 276-296 (IALS…YTRL), and 326-346 (LSPL…MSAL).

Belongs to the complex I subunit 2 family. As to quaternary structure, core subunit of respiratory chain NADH dehydrogenase (Complex I) which is composed of 45 different subunits. Interacts with TMEM242.

It is found in the mitochondrion inner membrane. It carries out the reaction a ubiquinone + NADH + 5 H(+)(in) = a ubiquinol + NAD(+) + 4 H(+)(out). In terms of biological role, core subunit of the mitochondrial membrane respiratory chain NADH dehydrogenase (Complex I) that is believed to belong to the minimal assembly required for catalysis. Complex I functions in the transfer of electrons from NADH to the respiratory chain. The immediate electron acceptor for the enzyme is believed to be ubiquinone. The chain is NADH-ubiquinone oxidoreductase chain 2 from Chrotopterus auritus (Peters's woolly false vampire bat).